The following is a 687-amino-acid chain: Fatty acid oxidation complex subunit alpha (687 aa).

The tract at residues 1-191 (MKNTSAFAWT…KLGVVDASVP (191 aa)) is enoyl-CoA hydratase. Residues 307–687 (KSIDYVGVLG…ADKYGDRFIE (381 aa)) form a 3-hydroxyacyl-CoA dehydrogenase region.

In the N-terminal section; belongs to the enoyl-CoA hydratase/isomerase family. It in the central section; belongs to the 3-hydroxyacyl-CoA dehydrogenase family. In terms of assembly, heterotetramer of two alpha chains (FadJ) and two beta chains (FadI).

It localises to the cytoplasm. The enzyme catalyses a (3S)-3-hydroxyacyl-CoA = a (2E)-enoyl-CoA + H2O. It catalyses the reaction a 4-saturated-(3S)-3-hydroxyacyl-CoA = a (3E)-enoyl-CoA + H2O. It carries out the reaction a (3S)-3-hydroxyacyl-CoA + NAD(+) = a 3-oxoacyl-CoA + NADH + H(+). The catalysed reaction is (3S)-3-hydroxybutanoyl-CoA = (3R)-3-hydroxybutanoyl-CoA. It functions in the pathway lipid metabolism; fatty acid beta-oxidation. In terms of biological role, catalyzes the formation of a hydroxyacyl-CoA by addition of water on enoyl-CoA. Also exhibits 3-hydroxyacyl-CoA epimerase and 3-hydroxyacyl-CoA dehydrogenase activities. The protein is Fatty acid oxidation complex subunit alpha of Aliivibrio fischeri (strain ATCC 700601 / ES114) (Vibrio fischeri).